The primary structure comprises 392 residues: Iripin-1 (392 aa).

An N-terminal signal peptide occupies residues M1–A16. Residues N104, N196, and N265 are each glycosylated (N-linked (GlcNAc...) asparagine).

Belongs to the serpin family. As to quaternary structure, interacts with human KLKB1. Interacts with human ST14. Interacts with human PLG (plasmin). As to expression, highly expressed in salivary gland. Expressed in midgut and ovary.

Its subcellular location is the secreted. Functionally, serine protease inhibitor that modulates blood feeding of ticks on vertebrate species. Modestly inhibits human trypsin, plasma kallikrein (KLKB1), matriptase (ST14) and plasmin (PLG) via a classic serpin inhibitory mechanism. Modestly reduces enzymatic activity of human alpha-chymotrypsin, coagulation factor Xa (F10), factor XIIa (F12), cathepsin G (CTSG), tPA/tissue-type plasminogen activator (PLAT) and uPA/urokinase-type plasminogen activator (PLAU). Probably acts as a substrate rather than an inhibitor for the human neutrophil elastase (ELANE) and thus reduces its enzymatic activity in in vitro assays. Decreases expression of adhesion molecules VCAM1 and CD99 on the surface of human cells. Increases the production of chemokines for neutrophils and monocytes, such as KC/CXCL1, MIP-2/CXCL2 and MIP-1/CCL2, and anti-inflammatory cytokine IL10 in mouse inflammation models. Reduces the recruitment of mouse neutrophils and monocytes to the site of inflammation. Decreases expression of CXCR2 on the surface of mouse neutrophils. Increases expression of integrin ITGAM/ITGB2 on the surface of mouse neutrophils. The protein is Iripin-1 of Ixodes ricinus (Common tick).